Consider the following 291-residue polypeptide: tRNA (guanine-N(1)-)-methyltransferase (291 aa).

Residues Gly-160 and 184–189 each bind S-adenosyl-L-methionine; that span reads IGDYVL.

The protein belongs to the RNA methyltransferase TrmD family. In terms of assembly, homodimer.

It localises to the cytoplasm. It carries out the reaction guanosine(37) in tRNA + S-adenosyl-L-methionine = N(1)-methylguanosine(37) in tRNA + S-adenosyl-L-homocysteine + H(+). Functionally, specifically methylates guanosine-37 in various tRNAs. The sequence is that of tRNA (guanine-N(1)-)-methyltransferase from Corynebacterium efficiens (strain DSM 44549 / YS-314 / AJ 12310 / JCM 11189 / NBRC 100395).